A 566-amino-acid chain; its full sequence is SRSF protein kinase 3 (566 aa).

Residues 1 to 13 (MSASTGGGGGGDS) are compositionally biased toward gly residues. Positions 1–60 (MSASTGGGGGGDSGSSSSSSSQASCGPEPSGSELAPPTPAPRMLQGLLGSDDEEQEDPKD) are disordered. A compositionally biased stretch (low complexity) spans 14-26 (GSSSSSSSQASCG). Ser50 carries the post-translational modification Phosphoserine. In terms of domain architecture, Protein kinase spans 79 to 564 (YHVVRKLGWG…AADCLQHPWL (486 aa)). ATP-binding positions include 85-93 (LGWGHFSTV) and Lys108. The active-site Proton acceptor is the Asp212. Over residues 236 to 254 (EWQQSGAPPPSRSTVSTAP) the composition is skewed to polar residues. Disordered regions lie at residues 236 to 283 (EWQQ…LLEE) and 295 to 353 (EAAA…SGFS). Positions 263–278 (SKNKRKKMRRKRKQQK) are enriched in basic residues. Ser329 bears the Phosphoserine mark. The segment covering 330–339 (PASSSPAPGG) has biased composition (low complexity). Over residues 344–353 (SPGSQTSGFS) the composition is skewed to polar residues.

It belongs to the protein kinase superfamily. In terms of tissue distribution, highly expressed in skeletal muscle, heart, uterus and parorchis. Weakly expressed in brain, stomach, small intestine and ovary.

The protein resides in the nucleus. It localises to the cytoplasm. It catalyses the reaction L-seryl-[protein] + ATP = O-phospho-L-seryl-[protein] + ADP + H(+). The catalysed reaction is L-threonyl-[protein] + ATP = O-phospho-L-threonyl-[protein] + ADP + H(+). Serine/arginine-rich protein-specific kinase which specifically phosphorylates its substrates at serine residues located in regions rich in arginine/serine dipeptides, known as RS domains. Phosphorylates the SR splicing factor SRSF1 and the lamin-B receptor (LBR) in vitro. Required for normal muscle development. The sequence is that of SRSF protein kinase 3 (SRPK3) from Sus scrofa (Pig).